The chain runs to 118 residues: V-type proton ATPase subunit G 2 (118 aa).

Residues 8-57 (IQQLLQAEKRAAEKVADARKRKARRLKQAKEEAQMEVDQYRREREQEFQS) adopt a coiled-coil conformation. The interval 25-90 (ARKRKARRLK…VQGMQSSQQR (66 aa)) is disordered. A compositionally biased stretch (basic and acidic residues) spans 35 to 55 (QAKEEAQMEVDQYRREREQEF). 2 stretches are compositionally biased toward polar residues: residues 56–69 (QSKQQAAMGSQGNL) and 78–89 (RRQVQGMQSSQQ).

This sequence belongs to the V-ATPase G subunit family. In terms of assembly, V-ATPase is a heteromultimeric enzyme made up of two complexes: the ATP-hydrolytic V1 complex and the proton translocation V0 complex. The V1 complex consists of three catalytic AB heterodimers that form a heterohexamer, three peripheral stalks each consisting of EG heterodimers, one central rotor including subunits D and F, and the regulatory subunits C and H. The proton translocation complex V0 consists of the proton transport subunit a, a ring of proteolipid subunits c9c'', rotary subunit d, subunits e and f, and the accessory subunits ATP6AP1/Ac45 and ATP6AP2/PRR. In terms of tissue distribution, expressed in brain (at protein level).

It localises to the melanosome. The protein localises to the cytoplasmic vesicle. It is found in the clathrin-coated vesicle membrane. Subunit of the V1 complex of vacuolar(H+)-ATPase (V-ATPase), a multisubunit enzyme composed of a peripheral complex (V1) that hydrolyzes ATP and a membrane integral complex (V0) that translocates protons. V-ATPase is responsible for acidifying and maintaining the pH of intracellular compartments and in some cell types, is targeted to the plasma membrane, where it is responsible for acidifying the extracellular environment. This is V-type proton ATPase subunit G 2 from Bos taurus (Bovine).